We begin with the raw amino-acid sequence, 198 residues long: Protein C4 (198 aa).

Residues 1–36 (MFNPRHPGGEFFGRKHHRRHAPDGRSSSSSSSSSEC) are disordered.

The polypeptide is Protein C4 (C4) (Giardia intestinalis (Giardia lamblia)).